The chain runs to 458 residues: Adenylosuccinate synthetase (458 aa).

GTP-binding positions include 17–23 (GDEGKGK) and 45–47 (GHT). Residue D18 is the Proton acceptor of the active site. Positions 18 and 45 each coordinate Mg(2+). IMP contacts are provided by residues 18–21 (DEGK), 43–46 (NAGH), T137, R151, Q247, T262, and R330. H46 serves as the catalytic Proton donor. 326–332 (VTTGRSR) contacts substrate. GTP is bound by residues R332, 358–360 (KLD), and 440–442 (STG).

Belongs to the adenylosuccinate synthetase family. As to quaternary structure, homodimer. Mg(2+) serves as cofactor.

The protein localises to the cytoplasm. It catalyses the reaction IMP + L-aspartate + GTP = N(6)-(1,2-dicarboxyethyl)-AMP + GDP + phosphate + 2 H(+). It participates in purine metabolism; AMP biosynthesis via de novo pathway; AMP from IMP: step 1/2. Functionally, plays an important role in the de novo pathway of purine nucleotide biosynthesis. Catalyzes the first committed step in the biosynthesis of AMP from IMP. The protein is Adenylosuccinate synthetase of Albidiferax ferrireducens (strain ATCC BAA-621 / DSM 15236 / T118) (Rhodoferax ferrireducens).